Reading from the N-terminus, the 254-residue chain is Serotonin N-acetyltransferase 1, chloroplastic (254 aa).

Residues 1–74 constitute a chloroplast transit peptide; sequence MAPAASASAS…LRSGFLKSNN (74 aa). One can recognise an N-acetyltransferase domain in the interval 111-254; sequence IIFSSAGDVN…IKGMFWYPRF (144 aa).

The protein belongs to the acetyltransferase family. As to expression, expressed in roots and shoots.

The protein resides in the plastid. Its subcellular location is the chloroplast. It is found in the nucleus. The catalysed reaction is serotonin + acetyl-CoA = N-acetylserotonin + CoA + H(+). The enzyme catalyses tyramine + acetyl-CoA = N-acetyltyramine + CoA + H(+). It carries out the reaction tryptamine + acetyl-CoA = N-acetyltryptamine + CoA + H(+). It catalyses the reaction 5-methoxytryptamine + acetyl-CoA = melatonin + CoA + H(+). It participates in aromatic compound metabolism; melatonin biosynthesis; melatonin from serotonin: step 1/2. Its function is as follows. Catalyzes the N-acetylation of serotonin into N-acetylserotonin, the penultimate step in the synthesis of melatonin. Catalyzes in vitro the N-acetylation of tryptamine to produce N-acetyltryptamine, 5-methoxytryptamine to produce melatonin and tyramine to produce N-acetyltyramine. The sequence is that of Serotonin N-acetyltransferase 1, chloroplastic from Oryza sativa subsp. japonica (Rice).